The primary structure comprises 349 residues: N-acetyltaurine hydrolase (349 aa).

A divalent metal cation is bound by residues His-26, His-28, Glu-169, His-201, His-230, and Asp-298.

Belongs to the metallo-dependent hydrolases superfamily. Phosphotriesterase family. A divalent metal cation is required as a cofactor.

The protein resides in the cytoplasm. It is found in the cytosol. It carries out the reaction N-acetyltaurine + H2O = taurine + acetate. The catalysed reaction is N-propanoyltaurine + H2O = propanoate + taurine. The enzyme catalyses N-acetyl-L-methionine + H2O = L-methionine + acetate. It catalyses the reaction N-acetyl-L-isoleucine + H2O = L-isoleucine + acetate. It carries out the reaction N-acetyl-L-leucine + H2O = L-leucine + acetate. The catalysed reaction is N-acetyl-L-valine + H2O = L-valine + acetate. N-acetyltaurine hydrolase that catalyzes the hydrolysis of N-acetyltaurine into taurine and acetate. PTER also acts on other N-acetyl amino acids (Met, Ile, Leu, Val) and N-propionyltaurine, but at lower rates. The sequence is that of N-acetyltaurine hydrolase (pter) from Danio rerio (Zebrafish).